A 249-amino-acid polypeptide reads, in one-letter code: Coproheme decarboxylase (249 aa).

Fe-coproporphyrin III-binding positions include Arg-131, 145 to 149, His-172, and Gln-185; that span reads YPMDK. Residue Tyr-145 is part of the active site.

It belongs to the ChdC family. Type 1 subfamily. It depends on Fe-coproporphyrin III as a cofactor.

It carries out the reaction Fe-coproporphyrin III + 2 H2O2 + 2 H(+) = heme b + 2 CO2 + 4 H2O. The catalysed reaction is Fe-coproporphyrin III + H2O2 + H(+) = harderoheme III + CO2 + 2 H2O. It catalyses the reaction harderoheme III + H2O2 + H(+) = heme b + CO2 + 2 H2O. It participates in porphyrin-containing compound metabolism; protoheme biosynthesis. Its function is as follows. Involved in coproporphyrin-dependent heme b biosynthesis. Catalyzes the decarboxylation of Fe-coproporphyrin III (coproheme) to heme b (protoheme IX), the last step of the pathway. The reaction occurs in a stepwise manner with a three-propionate intermediate. This is Coproheme decarboxylase from Staphylococcus saprophyticus subsp. saprophyticus (strain ATCC 15305 / DSM 20229 / NCIMB 8711 / NCTC 7292 / S-41).